A 934-amino-acid polypeptide reads, in one-letter code: Serine/threonine-protein kinase PknD (934 aa).

One can recognise a Protein kinase domain in the interval 4-296; sequence YELIRLIGRG…ELRKALQPHL (293 aa). ATP contacts are provided by residues 10-18 and lysine 33; that span reads IGRGGMGEV. The active-site Proton acceptor is aspartate 138.

The protein belongs to the protein kinase superfamily. Ser/Thr protein kinase family. Autophosphorylated on serine and threonine residues.

It catalyses the reaction L-seryl-[protein] + ATP = O-phospho-L-seryl-[protein] + ADP + H(+). The catalysed reaction is L-threonyl-[protein] + ATP = O-phospho-L-threonyl-[protein] + ADP + H(+). Together with the serine/threonine kinase Pkn1, may play a role in the specific interactions with host proteins during intracellular growth. This is Serine/threonine-protein kinase PknD from Chlamydia muridarum (strain MoPn / Nigg).